The chain runs to 239 residues: Sugar fermentation stimulation protein homolog (239 aa).

This sequence belongs to the SfsA family.

The polypeptide is Sugar fermentation stimulation protein homolog (Desulforamulus reducens (strain ATCC BAA-1160 / DSM 100696 / MI-1) (Desulfotomaculum reducens)).